We begin with the raw amino-acid sequence, 678 residues long: Methionine--tRNA ligase (678 aa).

Positions 14 to 24 (PYANGSIHLGH) match the 'HIGH' region motif. Residues C145, C148, C158, and C161 each contribute to the Zn(2+) site. The 'KMSKS' region signature appears at 331-335 (KMSKS). Residue K334 participates in ATP binding. A tRNA-binding domain is found at 576-678 (AFAAVDLRIA…SGAKPGQRVK (103 aa)).

Belongs to the class-I aminoacyl-tRNA synthetase family. MetG type 1 subfamily. Homodimer. It depends on Zn(2+) as a cofactor.

The protein localises to the cytoplasm. It catalyses the reaction tRNA(Met) + L-methionine + ATP = L-methionyl-tRNA(Met) + AMP + diphosphate. Is required not only for elongation of protein synthesis but also for the initiation of all mRNA translation through initiator tRNA(fMet) aminoacylation. This chain is Methionine--tRNA ligase, found in Pseudomonas aeruginosa (strain UCBPP-PA14).